A 65-amino-acid polypeptide reads, in one-letter code: Large ribosomal subunit protein bL35 (65 aa).

Positions 1 to 25 (MPKMKSHRGAAKRFKKTGTGKLKRA) are disordered.

This sequence belongs to the bacterial ribosomal protein bL35 family.

This Clostridium botulinum (strain Eklund 17B / Type B) protein is Large ribosomal subunit protein bL35.